Reading from the N-terminus, the 206-residue chain is Nucleoside triphosphate pyrophosphatase (206 aa).

The Proton acceptor role is filled by D76.

It belongs to the Maf family. A divalent metal cation is required as a cofactor.

It localises to the cytoplasm. It carries out the reaction a ribonucleoside 5'-triphosphate + H2O = a ribonucleoside 5'-phosphate + diphosphate + H(+). The catalysed reaction is a 2'-deoxyribonucleoside 5'-triphosphate + H2O = a 2'-deoxyribonucleoside 5'-phosphate + diphosphate + H(+). Functionally, nucleoside triphosphate pyrophosphatase. May have a dual role in cell division arrest and in preventing the incorporation of modified nucleotides into cellular nucleic acids. The protein is Nucleoside triphosphate pyrophosphatase of Streptomyces coelicolor (strain ATCC BAA-471 / A3(2) / M145).